The primary structure comprises 70 residues: Melittin (70 aa).

The signal sequence occupies residues 1–21; sequence MKFLVNVALVFMVVYISFIYA. Residues 22–43 constitute a propeptide, removed by a dipeptidylpeptidase; that stretch reads APEPEPAPEAEAEADAEADPEA. Residue glycine 44 is modified to N-formylglycine; partial. Glutamine 69 carries the glutamine amide modification.

It belongs to the melittin family. Monomer (in solution and for integration into membranes), homotetramer (in solution and potentially as a toroidal pore in membranes), and potenially homomultimer (as a toroidal pore in membranes). In terms of tissue distribution, expressed by the venom gland.

It is found in the secreted. It localises to the target cell membrane. In terms of biological role, main toxin of bee venom with strong hemolytic activity and antimicrobial activity. It has enhancing effects on bee venom phospholipase A2 activity. This amphipathic toxin binds to negatively charged membrane surface and forms pore by inserting into lipid bilayers inducing the leakage of ions and molecules and the enhancement of permeability that ultimately leads to cell lysis. It acts as a voltage-gated pore with higher selectivity for anions over cations. The ion conductance has been shown to be voltage-dependent. Self-association of melittin in membranes is promoted by high ionic strength, but not by the presence of negatively charged lipids. In vivo, intradermal injection into healthy human volunteers produce sharp pain sensation and an inflammatory response. It produces pain by activating primary nociceptor cells directly and indirectly due to its ability to activate plasma membrane phospholipase A2 and its pore-forming activity. In Polistes hebraeus (Paper wasp), this protein is Melittin (MELT).